The following is a 758-amino-acid chain: 5-methyltetrahydropteroyltriglutamate--homocysteine methyltransferase (758 aa).

5-methyltetrahydropteroyltri-L-glutamate-binding positions include 17–20 (RELK) and K117. L-homocysteine contacts are provided by residues 434 to 436 (IGS) and E487. L-methionine-binding positions include 434-436 (IGS) and E487. 5-methyltetrahydropteroyltri-L-glutamate contacts are provided by residues 518 to 519 (RC) and W564. D602 is an L-homocysteine binding site. Residue D602 coordinates L-methionine. E608 serves as a coordination point for 5-methyltetrahydropteroyltri-L-glutamate. Zn(2+) is bound by residues H644, C646, and E668. H697 serves as the catalytic Proton donor. C729 is a binding site for Zn(2+).

Belongs to the vitamin-B12 independent methionine synthase family. Zn(2+) is required as a cofactor.

The catalysed reaction is 5-methyltetrahydropteroyltri-L-glutamate + L-homocysteine = tetrahydropteroyltri-L-glutamate + L-methionine. Its pathway is amino-acid biosynthesis; L-methionine biosynthesis via de novo pathway; L-methionine from L-homocysteine (MetE route): step 1/1. Functionally, catalyzes the transfer of a methyl group from 5-methyltetrahydrofolate to homocysteine resulting in methionine formation. The chain is 5-methyltetrahydropteroyltriglutamate--homocysteine methyltransferase from Photorhabdus laumondii subsp. laumondii (strain DSM 15139 / CIP 105565 / TT01) (Photorhabdus luminescens subsp. laumondii).